We begin with the raw amino-acid sequence, 297 residues long: Acetylglutamate kinase (297 aa).

Residues 64-65, arginine 86, and asparagine 190 each bind substrate; that span reads GG.

This sequence belongs to the acetylglutamate kinase family. ArgB subfamily.

It localises to the cytoplasm. The enzyme catalyses N-acetyl-L-glutamate + ATP = N-acetyl-L-glutamyl 5-phosphate + ADP. It functions in the pathway amino-acid biosynthesis; L-arginine biosynthesis; N(2)-acetyl-L-ornithine from L-glutamate: step 2/4. Its function is as follows. Catalyzes the ATP-dependent phosphorylation of N-acetyl-L-glutamate. The sequence is that of Acetylglutamate kinase from Solidesulfovibrio magneticus (strain ATCC 700980 / DSM 13731 / RS-1) (Desulfovibrio magneticus).